Here is a 130-residue protein sequence, read N- to C-terminus: MSDTWLNKVNWSADGLVPVVTQDAISNKVLMVAWMNPEALRLTAQTGEAHYWSRSRKKLWHKGEESGHVQKVKEIRLDCDEDVLLLVVEQVGGVACHTGRHHCFFKKLEQDQWLVTEPVIKNPEEIYGQR.

Residue Asp-78 participates in Mg(2+) binding. Zn(2+) is bound at residue Cys-79. Residues Asp-80 and Asp-82 each contribute to the Mg(2+) site. Zn(2+) contacts are provided by Cys-96 and Cys-103.

This sequence belongs to the PRA-CH family. Homodimer. It depends on Mg(2+) as a cofactor. Requires Zn(2+) as cofactor.

The protein resides in the cytoplasm. It catalyses the reaction 1-(5-phospho-beta-D-ribosyl)-5'-AMP + H2O = 1-(5-phospho-beta-D-ribosyl)-5-[(5-phospho-beta-D-ribosylamino)methylideneamino]imidazole-4-carboxamide. Its pathway is amino-acid biosynthesis; L-histidine biosynthesis; L-histidine from 5-phospho-alpha-D-ribose 1-diphosphate: step 3/9. Its function is as follows. Catalyzes the hydrolysis of the adenine ring of phosphoribosyl-AMP. This is Phosphoribosyl-AMP cyclohydrolase from Nitrosospira multiformis (strain ATCC 25196 / NCIMB 11849 / C 71).